A 423-amino-acid chain; its full sequence is Adenylosuccinate synthetase (423 aa).

Residues 12 to 18 (GDEGKGK) and 40 to 42 (GHT) contribute to the GTP site. The Proton acceptor role is filled by aspartate 13. Mg(2+) is bound by residues aspartate 13 and glycine 40. Residues 13–16 (DEGK), 38–41 (NAGH), threonine 128, arginine 142, glutamine 223, threonine 238, and arginine 302 contribute to the IMP site. Histidine 41 (proton donor) is an active-site residue. 298–304 (TTTGRPR) serves as a coordination point for substrate. GTP-binding positions include arginine 304, 330 to 332 (RLD), and 412 to 414 (CIG).

It belongs to the adenylosuccinate synthetase family. In terms of assembly, homodimer. It depends on Mg(2+) as a cofactor.

Its subcellular location is the cytoplasm. The catalysed reaction is IMP + L-aspartate + GTP = N(6)-(1,2-dicarboxyethyl)-AMP + GDP + phosphate + 2 H(+). The protein operates within purine metabolism; AMP biosynthesis via de novo pathway; AMP from IMP: step 1/2. In terms of biological role, plays an important role in the de novo pathway of purine nucleotide biosynthesis. Catalyzes the first committed step in the biosynthesis of AMP from IMP. The polypeptide is Adenylosuccinate synthetase (Dehalococcoides mccartyi (strain ATCC BAA-2100 / JCM 16839 / KCTC 5957 / BAV1)).